A 740-amino-acid polypeptide reads, in one-letter code: Eukaryotic translation initiation factor 3 subunit B (740 aa).

Positions 1–10 are enriched in polar residues; the sequence is MAPSFDTLSE. The segment at 1-20 is disordered; that stretch reads MAPSFDTLSEQDLHEEEEEE. In terms of domain architecture, RRM spans 40-126; that stretch reads TFVVIDGLPV…HTLLVNKLMD (87 aa). WD repeat units follow at residues 193-230, 232-289, 302-343, 455-496, 513-556, and 571-609; these read AHWT…KQKQ, PHPF…RSFV, EPKK…LLGK, SLKD…SFFA, IEKK…EKPE, and IEHY…HTFA. The disordered stretch occupies residues 695 to 721; that stretch reads DAYGLPEEADDPKLAKDAAATTQEQGE.

Belongs to the eIF-3 subunit B family. As to quaternary structure, component of the eukaryotic translation initiation factor 3 (eIF-3) complex.

The protein localises to the cytoplasm. Its function is as follows. RNA-binding component of the eukaryotic translation initiation factor 3 (eIF-3) complex, which is involved in protein synthesis of a specialized repertoire of mRNAs and, together with other initiation factors, stimulates binding of mRNA and methionyl-tRNAi to the 40S ribosome. The eIF-3 complex specifically targets and initiates translation of a subset of mRNAs involved in cell proliferation. The sequence is that of Eukaryotic translation initiation factor 3 subunit B (prt1) from Neosartorya fischeri (strain ATCC 1020 / DSM 3700 / CBS 544.65 / FGSC A1164 / JCM 1740 / NRRL 181 / WB 181) (Aspergillus fischerianus).